The sequence spans 358 residues: Alanine racemase (358 aa).

Residue K35 is the Proton acceptor; specific for D-alanine of the active site. K35 is modified (N6-(pyridoxal phosphate)lysine). R130 is a binding site for substrate. Residue Y255 is the Proton acceptor; specific for L-alanine of the active site. Residue M303 coordinates substrate.

This sequence belongs to the alanine racemase family. Requires pyridoxal 5'-phosphate as cofactor.

It carries out the reaction L-alanine = D-alanine. It functions in the pathway amino-acid biosynthesis; D-alanine biosynthesis; D-alanine from L-alanine: step 1/1. Its function is as follows. Catalyzes the interconversion of L-alanine and D-alanine. May also act on other amino acids. This is Alanine racemase (alr) from Shewanella sp. (strain MR-7).